We begin with the raw amino-acid sequence, 630 residues long: GTPase-activating protein NEL1 (630 aa).

It belongs to the SEC23/SEC24 family. SEC23 subfamily.

The protein localises to the cytoplasm. It is found in the nucleus. Its function is as follows. Acts as a GTPase-activating protein (GAP) for SAR1. Contrary to its SEC23 homolog, NEL1 does not associate with SEC24 and its homologs, nor does it associate with the COPII components, suggesting that it is unlikely that NEL1 functions as a structural component of the vesicle coat machinery. May function as a signaling molecule. In Saccharomyces cerevisiae (strain ATCC 204508 / S288c) (Baker's yeast), this protein is GTPase-activating protein NEL1.